The sequence spans 397 residues: Acetate kinase (397 aa).

N8 is a Mg(2+) binding site. Position 15 (K15) interacts with ATP. R89 contacts substrate. The active-site Proton donor/acceptor is the D146. ATP contacts are provided by residues 206–210 (HVGNG), 283–285 (DMR), and 331–335 (GIGEN). E383 provides a ligand contact to Mg(2+).

Belongs to the acetokinase family. In terms of assembly, homodimer. Mg(2+) is required as a cofactor. Requires Mn(2+) as cofactor.

It localises to the cytoplasm. The catalysed reaction is acetate + ATP = acetyl phosphate + ADP. Its pathway is metabolic intermediate biosynthesis; acetyl-CoA biosynthesis; acetyl-CoA from acetate: step 1/2. Catalyzes the formation of acetyl phosphate from acetate and ATP. Can also catalyze the reverse reaction. The polypeptide is Acetate kinase (Streptococcus thermophilus (strain ATCC BAA-491 / LMD-9)).